The following is a 365-amino-acid chain: 3-isopropylmalate dehydrogenase (365 aa).

80–91 (GPKWGTGEVRPE) provides a ligand contact to NAD(+). 4 residues coordinate substrate: Arg-98, Arg-108, Arg-137, and Asp-226. Residues Asp-226, Asp-251, and Asp-255 each coordinate Mg(2+). Position 290 to 301 (290 to 301 (GSAPDLPKNKVN)) interacts with NAD(+).

This sequence belongs to the isocitrate and isopropylmalate dehydrogenases family. Homodimer. Mg(2+) serves as cofactor. Mn(2+) is required as a cofactor.

Its subcellular location is the cytoplasm. The enzyme catalyses (2R,3S)-3-isopropylmalate + NAD(+) = 4-methyl-2-oxopentanoate + CO2 + NADH. It participates in amino-acid biosynthesis; L-leucine biosynthesis; L-leucine from 3-methyl-2-oxobutanoate: step 3/4. Functionally, catalyzes the oxidation of 3-carboxy-2-hydroxy-4-methylpentanoate (3-isopropylmalate) to 3-carboxy-4-methyl-2-oxopentanoate. The product decarboxylates to 4-methyl-2 oxopentanoate. In Candida boidinii (Yeast), this protein is 3-isopropylmalate dehydrogenase (LEU2).